The sequence spans 501 residues: Lysine--tRNA ligase (501 aa).

Mg(2+) contacts are provided by Glu-402 and Glu-409.

This sequence belongs to the class-II aminoacyl-tRNA synthetase family. In terms of assembly, homodimer. Requires Mg(2+) as cofactor.

Its subcellular location is the cytoplasm. It carries out the reaction tRNA(Lys) + L-lysine + ATP = L-lysyl-tRNA(Lys) + AMP + diphosphate. The sequence is that of Lysine--tRNA ligase from Helicobacter pylori (strain Shi470).